The following is a 309-amino-acid chain: Ubiquitin domain-containing protein UBFD1 (309 aa).

The disordered stretch occupies residues 1–80; sequence MAAAGAPDGM…VSNGEDAGGG (80 aa). Over residues 9 to 19 the composition is skewed to acidic residues; the sequence is GMEEPGMDTEA. The span at 35–57 shows a compositional bias: low complexity; sequence EAEAAAGAAAEDSGAARGSLQPA. One can recognise a Ubiquitin-like domain in the interval 84-159; sequence ELVDLKIIWN…IMVVGSTIND (76 aa). The tract at residues 171 to 204 is disordered; it reads QQDAKAEENKKEPLCRQKQHRKVLDKGKPEDVMP. Basic and acidic residues-rich tracts occupy residues 174–185 and 192–201; these read AKAEENKKEPLC and KVLDKGKPED.

In terms of assembly, binds polyubiquitin.

Functionally, may play a role as NF-kappa-B regulator. The protein is Ubiquitin domain-containing protein UBFD1 (UBFD1) of Homo sapiens (Human).